The primary structure comprises 108 residues: Urease subunit beta (108 aa).

It belongs to the urease beta subunit family. In terms of assembly, heterotrimer of UreA (gamma), UreB (beta) and UreC (alpha) subunits. Three heterotrimers associate to form the active enzyme.

The protein resides in the cytoplasm. The enzyme catalyses urea + 2 H2O + H(+) = hydrogencarbonate + 2 NH4(+). The protein operates within nitrogen metabolism; urea degradation; CO(2) and NH(3) from urea (urease route): step 1/1. This is Urease subunit beta from Nocardia farcinica (strain IFM 10152).